The sequence spans 210 residues: Leucyl/phenylalanyl-tRNA--protein transferase (210 aa).

The protein belongs to the L/F-transferase family.

It is found in the cytoplasm. It catalyses the reaction N-terminal L-lysyl-[protein] + L-leucyl-tRNA(Leu) = N-terminal L-leucyl-L-lysyl-[protein] + tRNA(Leu) + H(+). The enzyme catalyses N-terminal L-arginyl-[protein] + L-leucyl-tRNA(Leu) = N-terminal L-leucyl-L-arginyl-[protein] + tRNA(Leu) + H(+). It carries out the reaction L-phenylalanyl-tRNA(Phe) + an N-terminal L-alpha-aminoacyl-[protein] = an N-terminal L-phenylalanyl-L-alpha-aminoacyl-[protein] + tRNA(Phe). Functions in the N-end rule pathway of protein degradation where it conjugates Leu, Phe and, less efficiently, Met from aminoacyl-tRNAs to the N-termini of proteins containing an N-terminal arginine or lysine. The polypeptide is Leucyl/phenylalanyl-tRNA--protein transferase (Ruegeria sp. (strain TM1040) (Silicibacter sp.)).